We begin with the raw amino-acid sequence, 345 residues long: Biotin synthase (345 aa).

Residues 38-256 enclose the Radical SAM core domain; it reads GEVQVSTLLS…IAVARIMMPR (219 aa). 3 residues coordinate [4Fe-4S] cluster: Cys53, Cys57, and Cys60. Positions 97, 128, 188, and 260 each coordinate [2Fe-2S] cluster.

The protein belongs to the radical SAM superfamily. Biotin synthase family. In terms of assembly, homodimer. It depends on [4Fe-4S] cluster as a cofactor. [2Fe-2S] cluster serves as cofactor.

It catalyses the reaction (4R,5S)-dethiobiotin + (sulfur carrier)-SH + 2 reduced [2Fe-2S]-[ferredoxin] + 2 S-adenosyl-L-methionine = (sulfur carrier)-H + biotin + 2 5'-deoxyadenosine + 2 L-methionine + 2 oxidized [2Fe-2S]-[ferredoxin]. It participates in cofactor biosynthesis; biotin biosynthesis; biotin from 7,8-diaminononanoate: step 2/2. Catalyzes the conversion of dethiobiotin (DTB) to biotin by the insertion of a sulfur atom into dethiobiotin via a radical-based mechanism. The sequence is that of Biotin synthase from Sodalis glossinidius (strain morsitans).